The sequence spans 537 residues: MLFINTDLQECLNALNLEFDEHKELVKLVKNNSFSGFASTVVFHLKGVNQKETAQQIAAWLLKHKKAHYRRVFVANNNFINFEISPQKYLDFLKTKPTFAPKPTKVLIEWVSANPTGELHLGHVRNAFFGHVLNNLMVFLGFQTVREYWVNDYGQQARVFGFSVYQALHLQQNIKVTPHPDGYEGELVDSIAKTITGIPLDKLSFEEFLQQPFLDQLLADCTAKVLEVIKQDLATIHIHFDSWKFESQVVKETDYKKLLTQFKDEAHYEKDGAIWLKTTLYGDDKDRVLVRQDNRPSYFGTDVAYHLDKAARGFDLLYDIWGSDHEGHIKRMHCVYEGLKIHQKCQLKITALQLVMLYKNKEIVRLSKRAGNVITIKQMLQMLSEDAARWFMLSQTNNSIIKIDLDTANLQNSSNPVYYVQYAYARMCSVLKVVDQAALAQVNDCSLLTHEKEIALLDQLVYFKSLLEKVQVSHELHLLTNYLYETATLFHSWYKACKINDPAQYNLTQQRLLLLQSLHHVFGQLLQILNITAPQQM.

Positions 113–123 match the 'HIGH' region motif; that stretch reads ANPTGELHLGH.

It belongs to the class-I aminoacyl-tRNA synthetase family. As to quaternary structure, monomer.

The protein localises to the cytoplasm. The catalysed reaction is tRNA(Arg) + L-arginine + ATP = L-arginyl-tRNA(Arg) + AMP + diphosphate. In Mycoplasma pneumoniae (strain ATCC 29342 / M129 / Subtype 1) (Mycoplasmoides pneumoniae), this protein is Arginine--tRNA ligase (argS).